A 24-amino-acid polypeptide reads, in one-letter code: Small ribosomal subunit protein uS19 (24 aa).

Residues 1–24 are disordered; sequence KLGEFSPTRTYRGHNKKDKKMQKK. Basic residues predominate over residues 11-24; sequence YRGHNKKDKKMQKK.

This sequence belongs to the universal ribosomal protein uS19 family.

Its function is as follows. Protein S19 forms a complex with S13 that binds strongly to the 16S ribosomal RNA. The protein is Small ribosomal subunit protein uS19 of Phytoplasma sp. (strain STRAWB2).